The primary structure comprises 371 residues: Peptide chain release factor 2 (371 aa).

Q251 bears the N5-methylglutamine mark.

It belongs to the prokaryotic/mitochondrial release factor family. Post-translationally, methylated by PrmC. Methylation increases the termination efficiency of RF2.

It localises to the cytoplasm. Its function is as follows. Peptide chain release factor 2 directs the termination of translation in response to the peptide chain termination codons UGA and UAA. The protein is Peptide chain release factor 2 of Arthrobacter sp. (strain FB24).